The sequence spans 28 residues: NU-theraphotoxin-Preg1a (28 aa).

Intrachain disulfides connect Cys-2–Cys-19, Cys-9–Cys-22, and Cys-18–Cys-27.

Expressed by the venom gland.

It is found in the secreted. In terms of biological role, toxin that acts as an agonist on melanocortin receptors (MC1R, MC3R, MC5R, MC5R). After binding to MC1R, the peptide activates the hMC1R/Gs pathway, but after binding to MC4R, it is not able to activate or antagonize the MC4R/Gs pathway. Inhibits melanocyte stimulating hormone (MSH)-binding to human receptors (Ki=1.8 uM to MC1R, Ki=19.8 uM to MC3R, Ki=7.1 uM to MC4R, Ki=10.0 uM to MC5R). This toxin is structurally unrelated to the natural agonists. The protein is NU-theraphotoxin-Preg1a of Poecilotheria regalis (Indian ornamental tree spider).